Here is a 568-residue protein sequence, read N- to C-terminus: Putative DEAD-box RNA helicase HEL64 (568 aa).

Residues 1–34 (MEETYSPFTGRQGQYNQGYNGGGRRDSRGGMGER) form a disordered region. The segment covering 23–34 (GRRDSRGGMGER) has biased composition (basic and acidic residues). Positions 102–130 (FDHLCGIVPPYLLKKLTAQNFTAPTPVQA) match the Q motif motif. The Helicase ATP-binding domain maps to 133-307 (WPVLLSGRDL…AEFQKQWIRI (175 aa)). 146-153 (AKTGSGKT) contributes to the ATP binding site. The DEAD box signature appears at 255–258 (DEAD). Residues 335-483 (ELRKLMQEHR…EIPDWMIEWN (149 aa)) form the Helicase C-terminal domain.

The protein belongs to the DEAD box helicase family. DDX5/DBP2 subfamily.

The protein resides in the nucleus. The catalysed reaction is ATP + H2O = ADP + phosphate + H(+). The polypeptide is Putative DEAD-box RNA helicase HEL64 (HEL64) (Trypanosoma brucei brucei).